We begin with the raw amino-acid sequence, 101 residues long: Cysteine-rich PDZ-binding protein (101 aa).

The protein belongs to the CRIPT family. Component of the minor spliceosome, which splices U12-type introns.

It localises to the cytoplasm. As a component of the minor spliceosome, involved in the splicing of U12-type introns in pre-mRNAs. This Ictalurus punctatus (Channel catfish) protein is Cysteine-rich PDZ-binding protein (cript).